Reading from the N-terminus, the 516-residue chain is RxLR effector protein PITG_15127 (516 aa).

A signal peptide spans M1–A22. A RxLR-dEER motif is present at residues R48 to R63.

This sequence belongs to the RxLR effector family.

It localises to the secreted. The protein resides in the host cell membrane. The protein localises to the host nucleus. Its subcellular location is the host cytoplasm. Effector that enhances P.infestans colonization of Nicotiana benthamiana leaves. This is RxLR effector protein PITG_15127 from Phytophthora infestans (strain T30-4) (Potato late blight agent).